Consider the following 433-residue polypeptide: tRNA modification GTPase MnmE (433 aa).

Residues Arg24, Glu86, and Lys125 each coordinate (6S)-5-formyl-5,6,7,8-tetrahydrofolate. The 146-residue stretch at 218–363 (GARLALIGAP…LKEALREALL (146 aa)) folds into the TrmE-type G domain. Asn228 contacts K(+). GTP contacts are provided by residues 228–233 (NAGKSS), 247–253 (SPIPGTT), and 272–275 (DTAG). A Mg(2+)-binding site is contributed by Ser232. 3 residues coordinate K(+): Ser247, Ile249, and Thr252. Thr253 lines the Mg(2+) pocket. Lys433 contributes to the (6S)-5-formyl-5,6,7,8-tetrahydrofolate binding site.

This sequence belongs to the TRAFAC class TrmE-Era-EngA-EngB-Septin-like GTPase superfamily. TrmE GTPase family. Homodimer. Heterotetramer of two MnmE and two MnmG subunits. The cofactor is K(+).

The protein localises to the cytoplasm. Its function is as follows. Exhibits a very high intrinsic GTPase hydrolysis rate. Involved in the addition of a carboxymethylaminomethyl (cmnm) group at the wobble position (U34) of certain tRNAs, forming tRNA-cmnm(5)s(2)U34. In Thermus thermophilus (strain ATCC BAA-163 / DSM 7039 / HB27), this protein is tRNA modification GTPase MnmE.